The chain runs to 339 residues: Aspartate carbamoyltransferase catalytic subunit (339 aa).

Residues arginine 69 and threonine 70 each coordinate carbamoyl phosphate. Lysine 97 is an L-aspartate binding site. 3 residues coordinate carbamoyl phosphate: arginine 119, histidine 149, and glutamine 152. 2 residues coordinate L-aspartate: arginine 182 and arginine 237. Carbamoyl phosphate-binding residues include glycine 278 and proline 279.

This sequence belongs to the aspartate/ornithine carbamoyltransferase superfamily. ATCase family. In terms of assembly, heterododecamer (2C3:3R2) of six catalytic PyrB chains organized as two trimers (C3), and six regulatory PyrI chains organized as three dimers (R2).

It catalyses the reaction carbamoyl phosphate + L-aspartate = N-carbamoyl-L-aspartate + phosphate + H(+). It functions in the pathway pyrimidine metabolism; UMP biosynthesis via de novo pathway; (S)-dihydroorotate from bicarbonate: step 2/3. Its function is as follows. Catalyzes the condensation of carbamoyl phosphate and aspartate to form carbamoyl aspartate and inorganic phosphate, the committed step in the de novo pyrimidine nucleotide biosynthesis pathway. This is Aspartate carbamoyltransferase catalytic subunit from Hydrogenovibrio crunogenus (strain DSM 25203 / XCL-2) (Thiomicrospira crunogena).